The chain runs to 114 residues: Flagellar hook-basal body complex protein FliE (114 aa).

The protein belongs to the FliE family.

Its subcellular location is the bacterial flagellum basal body. The chain is Flagellar hook-basal body complex protein FliE from Desulfitobacterium hafniense (strain Y51).